A 301-amino-acid polypeptide reads, in one-letter code: UDP-3-O-acyl-N-acetylglucosamine deacetylase (301 aa).

His-81, His-237, and Asp-241 together coordinate Zn(2+). The active-site Proton donor is the His-264.

The protein belongs to the LpxC family. Zn(2+) serves as cofactor.

The catalysed reaction is a UDP-3-O-[(3R)-3-hydroxyacyl]-N-acetyl-alpha-D-glucosamine + H2O = a UDP-3-O-[(3R)-3-hydroxyacyl]-alpha-D-glucosamine + acetate. It functions in the pathway glycolipid biosynthesis; lipid IV(A) biosynthesis; lipid IV(A) from (3R)-3-hydroxytetradecanoyl-[acyl-carrier-protein] and UDP-N-acetyl-alpha-D-glucosamine: step 2/6. Functionally, catalyzes the hydrolysis of UDP-3-O-myristoyl-N-acetylglucosamine to form UDP-3-O-myristoylglucosamine and acetate, the committed step in lipid A biosynthesis. The chain is UDP-3-O-acyl-N-acetylglucosamine deacetylase from Leptospira borgpetersenii serovar Hardjo-bovis (strain JB197).